The chain runs to 399 residues: Methylmalonic aciduria type A homolog, mitochondrial (399 aa).

Residues 1–15 constitute a mitochondrion transit peptide; it reads MVVRSLLRVSRLTSA. Residues 131–139, Asp-274, and 310–312 contribute to the GTP site; these read GSPGVGKSS and SIM.

It belongs to the SIMIBI class G3E GTPase family. ArgK/MeaB subfamily.

It is found in the mitochondrion. Functionally, may have GTPase activity. May also bind and hydrolyze ATP. May function as chaperone. Likely to have a role in propionyl-CoA and adenosylcobalamin metabolism. The sequence is that of Methylmalonic aciduria type A homolog, mitochondrial (mmaa-1) from Caenorhabditis elegans.